The following is a 298-amino-acid chain: tRNA pseudouridine synthase A (298 aa).

Catalysis depends on Asp-56, which acts as the Nucleophile. Substrate is bound at residue Tyr-125.

The protein belongs to the tRNA pseudouridine synthase TruA family. In terms of assembly, homodimer.

The catalysed reaction is uridine(38/39/40) in tRNA = pseudouridine(38/39/40) in tRNA. In terms of biological role, formation of pseudouridine at positions 38, 39 and 40 in the anticodon stem and loop of transfer RNAs. In Bifidobacterium animalis subsp. lactis (strain AD011), this protein is tRNA pseudouridine synthase A.